The primary structure comprises 662 residues: Translation factor guf1, mitochondrial (662 aa).

A mitochondrion-targeting transit peptide spans 1–42 (MRGCLQLARWLSAAPNWPASSLLKAPGSSFATRLFTTTSSYK). Positions 64–244 (ERYRNFCIVA…TVVEKIPAPI (181 aa)) constitute a tr-type G domain. GTP is bound by residues 73–80 (AHVDHGKS), 137–141 (DTPGH), and 191–194 (NKVD).

Belongs to the TRAFAC class translation factor GTPase superfamily. Classic translation factor GTPase family. LepA subfamily.

Its subcellular location is the mitochondrion inner membrane. It catalyses the reaction GTP + H2O = GDP + phosphate + H(+). In terms of biological role, promotes mitochondrial protein synthesis. May act as a fidelity factor of the translation reaction, by catalyzing a one-codon backward translocation of tRNAs on improperly translocated ribosomes. Binds to mitochondrial ribosomes in a GTP-dependent manner. The polypeptide is Translation factor guf1, mitochondrial (guf1) (Emericella nidulans (strain FGSC A4 / ATCC 38163 / CBS 112.46 / NRRL 194 / M139) (Aspergillus nidulans)).